We begin with the raw amino-acid sequence, 333 residues long: tRNA dimethylallyltransferase (333 aa).

16–23 (GPTASGKT) is an ATP binding site. 18 to 23 (TASGKT) lines the substrate pocket. Interaction with substrate tRNA stretches follow at residues 41–44 (DSAL), 165–169 (QRISR), and 253–258 (RCVGYR).

This sequence belongs to the IPP transferase family. In terms of assembly, monomer. Mg(2+) serves as cofactor.

It carries out the reaction adenosine(37) in tRNA + dimethylallyl diphosphate = N(6)-dimethylallyladenosine(37) in tRNA + diphosphate. Catalyzes the transfer of a dimethylallyl group onto the adenine at position 37 in tRNAs that read codons beginning with uridine, leading to the formation of N6-(dimethylallyl)adenosine (i(6)A). In Polaromonas sp. (strain JS666 / ATCC BAA-500), this protein is tRNA dimethylallyltransferase.